We begin with the raw amino-acid sequence, 399 residues long: DNA primase DnaG (399 aa).

One can recognise a Toprim domain in the interval 182–268 (DAIIVVEGRA…EVEDLTQKEI (87 aa)). Positions 188, 230, and 232 each coordinate Mg(2+).

It belongs to the archaeal DnaG primase family. In terms of assembly, forms a ternary complex with MCM helicase and DNA. Component of the archaeal exosome complex. Requires Mg(2+) as cofactor.

It carries out the reaction ssDNA + n NTP = ssDNA/pppN(pN)n-1 hybrid + (n-1) diphosphate.. In terms of biological role, RNA polymerase that catalyzes the synthesis of short RNA molecules used as primers for DNA polymerase during DNA replication. Also part of the exosome, which is a complex involved in RNA degradation. Acts as a poly(A)-binding protein that enhances the interaction between heteromeric, adenine-rich transcripts and the exosome. This chain is DNA primase DnaG, found in Archaeoglobus fulgidus (strain ATCC 49558 / DSM 4304 / JCM 9628 / NBRC 100126 / VC-16).